The chain runs to 1252 residues: Immunoglobulin superfamily DCC subclass member 4 (1252 aa).

A signal peptide spans 1–22 (MARADTGRGLLVLTFCLLSARG). The Extracellular segment spans residues 23 to 956 (ELPLPQETTV…SDSLDVHAVT (934 aa)). Ig-like domains lie at 27-136 (PQET…VAVV), 142-228 (EDFS…ASLT), 241-329 (QDVV…AELR), and 334-420 (PAIS…APLA). Intrachain disulfides connect Cys55-Cys120 and Cys163-Cys211. Asn88 carries N-linked (GlcNAc...) asparagine glycosylation. Residue Asn251 is glycosylated (N-linked (GlcNAc...) asparagine). 2 disulfides stabilise this stretch: Cys264/Cys311 and Cys355/Cys404. Fibronectin type-III domains are found at residues 430–524 (APTR…TLDD), 526–622 (PSAA…TPGV), 631–742 (APAE…TPDL), 751–844 (PPAH…TLPD), and 849–944 (PPSD…TLQK). The segment at 669–688 (TEEEADGDRPPGGRGDQAWD) is disordered. Residues 957–977 (GIIVGVCLGLLCLLACMCAGL) form a helical membrane-spanning segment. Residues 978 to 1252 (RRSSHREALP…RAPVSSAQVP (275 aa)) are Cytoplasmic-facing. Thr994 is modified (phosphothreonine).

The protein belongs to the immunoglobulin superfamily. DCC family. Expressed in skeletal muscle, heart and brain. Brain expression is hippocampus-specific.

Its subcellular location is the cell membrane. The chain is Immunoglobulin superfamily DCC subclass member 4 (Igdcc4) from Mus musculus (Mouse).